Reading from the N-terminus, the 331-residue chain is GTP 3',8-cyclase 2 (331 aa).

In terms of domain architecture, Radical SAM core spans 9-234; sequence PFGRRITYLR…PSLARSGGPS (226 aa). Arginine 18 contacts GTP. Cysteine 25 and cysteine 29 together coordinate [4Fe-4S] cluster. An S-adenosyl-L-methionine-binding site is contributed by tyrosine 31. Cysteine 32 serves as a coordination point for [4Fe-4S] cluster. Arginine 67 contacts GTP. Residue glycine 71 participates in S-adenosyl-L-methionine binding. Threonine 98 lines the GTP pocket. Serine 122 is an S-adenosyl-L-methionine binding site. Lysine 159 contacts GTP. Methionine 193 contacts S-adenosyl-L-methionine. 2 residues coordinate [4Fe-4S] cluster: cysteine 257 and cysteine 260. GTP is bound at residue 262–264; sequence RVR. Cysteine 274 contributes to the [4Fe-4S] cluster binding site.

This sequence belongs to the radical SAM superfamily. MoaA family. Monomer and homodimer. [4Fe-4S] cluster is required as a cofactor.

It carries out the reaction GTP + AH2 + S-adenosyl-L-methionine = (8S)-3',8-cyclo-7,8-dihydroguanosine 5'-triphosphate + 5'-deoxyadenosine + L-methionine + A + H(+). The protein operates within cofactor biosynthesis; molybdopterin biosynthesis. In terms of biological role, catalyzes the cyclization of GTP to (8S)-3',8-cyclo-7,8-dihydroguanosine 5'-triphosphate. This is GTP 3',8-cyclase 2 (moaA2) from Pseudomonas aeruginosa (strain ATCC 15692 / DSM 22644 / CIP 104116 / JCM 14847 / LMG 12228 / 1C / PRS 101 / PAO1).